A 236-amino-acid polypeptide reads, in one-letter code: Small ribosomal subunit protein uS2c (236 aa).

It belongs to the universal ribosomal protein uS2 family.

The protein localises to the plastid. The protein resides in the chloroplast. This Carica papaya (Papaya) protein is Small ribosomal subunit protein uS2c (rps2).